The chain runs to 166 residues: MNNTDTLEKIIRHQKNKDPAYPFQEHLLMQLCIRANKRMQDNISEFLGAYGINHSVYMVLTTLFTAESHCLSPSEISQKLQFTRTNITRITDFLEKTGYVKRTDSREDRRAKKISLTSEGMFFIQRLTLAQSMYLKEIWGYLTHDEQELFEVINKKLLAHLDDVSS.

Residues 25–159 enclose the HTH marR-type domain; sequence EHLLMQLCIR…FEVINKKLLA (135 aa).

It is found in the cytoplasm. The polypeptide is HTH-type transcriptional regulator PrsX (prsX) (Escherichia coli O6:H1 (strain CFT073 / ATCC 700928 / UPEC)).